Reading from the N-terminus, the 1026-residue chain is HEAT repeat-containing protein 4 (1026 aa).

Residues 135-175 (AVKTESSANPEKKLKKSKPASTVREAPRPLIHHPCMHPDML) form a disordered region. 3 HEAT repeats span residues 530–568 (LLPA…NIMQ), 724–760 (KLMT…QIRD), and 761–794 (KMVL…GQVS).

The sequence is that of HEAT repeat-containing protein 4 (HEATR4) from Homo sapiens (Human).